We begin with the raw amino-acid sequence, 287 residues long: Vesicle-associated protein 4-3 (287 aa).

Residues 1–14 are compositionally biased toward basic and acidic residues; that stretch reads MALTEDKSDSDGRR. The segment at 1–45 is disordered; it reads MALTEDKSDSDGRRWGKFKLPFRNSNSQAPSASSSSSMATSSSSV. Residues 25–45 show a composition bias toward low complexity; it reads SNSQAPSASSSSSMATSSSSV. The MSP domain maps to 99-221; that stretch reads RLKLDPSAKL…EEQVMRVVFL (123 aa).

It belongs to the VAMP-associated protein (VAP) (TC 9.B.17) family.

In terms of biological role, may play a role in vesicle trafficking. This chain is Vesicle-associated protein 4-3 (PVA43), found in Arabidopsis thaliana (Mouse-ear cress).